The sequence spans 557 residues: TBCC domain-containing protein 1 (557 aa).

The C-CAP/cofactor C-like domain occupies 290–435; it reads TTKRAKIACN…LEDHMARTGL (146 aa).

The protein belongs to the TBCC family.

The protein resides in the cytoplasm. The protein localises to the cytoskeleton. Its subcellular location is the microtubule organizing center. It is found in the centrosome. It localises to the spindle pole. In terms of biological role, plays a role in the regulation of centrosome and Golgi apparatus positioning, with consequences on cell shape and cell migration. This chain is TBCC domain-containing protein 1 (TBCCD1), found in Bos taurus (Bovine).